A 378-amino-acid chain; its full sequence is MLLLPLSVLILLTQPPRSLGAEMKTYSQRAVANACALVMCSPMENGLPGRDGRDGREGPRGEKGDPGLPGAVGRAGMPGLAGPVGPKGDNGSTGEPGAKGDIGPCGPPGPPGIPGPAGKEGPSGQQGNIGPPGTPGPKGETGPKGEVGALGMQGSTGARGPAGLKGERGAPGERGAPGSAGAAGPAGATGPQGPSGARGPPGLKGDRGPPGERGAKGESGLPGITALRQQVETLQGQVQRLQKAFSQYKKVELFPNGRGVGEKIFKTGGFEKTFQDAQQVCTQAGGQMASPRSETENEALSQLVTAQNKAAFLSMTDIKTEGNFTYPTGEPLVYANWAPGEPNNNGGSSGAENCVEIFPNGKWNDKACGELRLVICEF.

Positions 1–20 are cleaved as a signal peptide; it reads MLLLPLSVLILLTQPPRSLG. 2 positions are modified to S-nitrosocysteine: C35 and C40. The disordered stretch occupies residues 43–221; that stretch reads MENGLPGRDG…ERGAKGESGL (179 aa). The Collagen-like domain occupies 46–222; sequence GLPGRDGRDG…RGAKGESGLP (177 aa). Basic and acidic residues predominate over residues 50 to 65; the sequence is RDGRDGREGPRGEKGD. A 4-hydroxyproline modification is found at P78. K87 carries the post-translational modification 5-hydroxylysine. A glycan (N-linked (GlcNAc...) asparagine) is linked at N90. P96 carries the post-translational modification 4-hydroxyproline. K99 carries the post-translational modification 5-hydroxylysine. Residues 105 to 114 are compositionally biased toward pro residues; it reads CGPPGPPGIP. The segment covering 137 to 146 has biased composition (low complexity); the sequence is PKGETGPKGE. 4-hydroxyproline is present on residues P171 and P177. Low complexity predominate over residues 173–197; that stretch reads ERGAPGSAGAAGPAGATGPQGPSGA. Positions 204–216 are enriched in basic and acidic residues; the sequence is KGDRGPPGERGAK. The stretch at 223–254 forms a coiled coil; sequence GITALRQQVETLQGQVQRLQKAFSQYKKVELF. One can recognise a C-type lectin domain in the interval 260 to 378; it reads VGEKIFKTGG…GELRLVICEF (119 aa). Intrachain disulfides connect C281–C376 and C354–C368. N323 carries N-linked (GlcNAc...) asparagine glycosylation.

Belongs to the SFTPD family. As to quaternary structure, oligomeric complex of 4 set of homotrimers. Post-translationally, hydroxylation on proline residues within the sequence motif, GXPG, is most likely to be 4-hydroxy as this fits the requirement for 4-hydroxylation in vertebrates. S-nitrosylation at Cys-35 and Cys-40 alters the quaternary structure which results in a pro-inflammatory chemoattractive signaling activity with macrophages.

Its subcellular location is the secreted. It localises to the extracellular space. The protein localises to the extracellular matrix. It is found in the surface film. Contributes to the lung's defense against inhaled microorganisms, organic antigens and toxins. Interacts with compounds such as bacterial lipopolysaccharides, oligosaccharides and fatty acids and modulates leukocyte action in immune response. May participate in the extracellular reorganization or turnover of pulmonary surfactant. Binds strongly maltose residues and to a lesser extent other alpha-glucosyl moieties. The polypeptide is Pulmonary surfactant-associated protein D (SFTPD) (Sus scrofa (Pig)).